Reading from the N-terminus, the 98-residue chain is Aspartyl/glutamyl-tRNA(Asn/Gln) amidotransferase subunit C (98 aa).

Residues 77–98 are disordered; the sequence is NEAPNPEGDFFRVPQILNTDEE.

It belongs to the GatC family. In terms of assembly, heterotrimer of A, B and C subunits.

The catalysed reaction is L-glutamyl-tRNA(Gln) + L-glutamine + ATP + H2O = L-glutaminyl-tRNA(Gln) + L-glutamate + ADP + phosphate + H(+). The enzyme catalyses L-aspartyl-tRNA(Asn) + L-glutamine + ATP + H2O = L-asparaginyl-tRNA(Asn) + L-glutamate + ADP + phosphate + 2 H(+). Functionally, allows the formation of correctly charged Asn-tRNA(Asn) or Gln-tRNA(Gln) through the transamidation of misacylated Asp-tRNA(Asn) or Glu-tRNA(Gln) in organisms which lack either or both of asparaginyl-tRNA or glutaminyl-tRNA synthetases. The reaction takes place in the presence of glutamine and ATP through an activated phospho-Asp-tRNA(Asn) or phospho-Glu-tRNA(Gln). The protein is Aspartyl/glutamyl-tRNA(Asn/Gln) amidotransferase subunit C of Crocosphaera subtropica (strain ATCC 51142 / BH68) (Cyanothece sp. (strain ATCC 51142)).